Here is a 367-residue protein sequence, read N- to C-terminus: MTVPEHPFGLMAKVYRDIFPLVHQELDIWKQKSESIHNSELKAQATASIRDKTFHCEGGGILALLSGSQKQKCVEFIIAYQTISDYLDNLCDRSTSLDPQDFRMLHASMQDALTVGAELQNYYQFREEQDDSGYLHELVKTCQRVLGSIEHYDMIKPYLLELCGYYCDLQVHKHVIEHERVPRLEKWFTQYESELPEMEWYEFSACAGSTLGIFCLVAYSFQPDFTESTAKKIRDSYFPYIQGLHILLDYLIDQEEDLLEGDLNFCSYYQSHEEMMDRLEHFIHKADEHLQGIPHENFHRLINRGLLGVYLSDDKVAGQKEMGRLAKKLIKASGKTSLFFYINGRAYRKFQKMSWMKNSKKKAQIIC.

Belongs to the large terpene synthase family.

The enzyme catalyses all-trans-heptaprenyl diphosphate = (R)-tetraprenyl-beta-curcumene + diphosphate. Catalyzes the transformation of a linear C35 prenyl diphosphate chain to form tetraprenyl-beta-curcumene. The sequence is that of Tetraprenyl-beta-curcumene synthase (ytpB) from Bacillus subtilis (strain 168).